Consider the following 524-residue polypeptide: Lysophospholipid acyltransferase LPCAT4 (524 aa).

The next 2 membrane-spanning stretches (helical) occupy residues 40–62 (CLLG…FLLW) and 87–107 (TVCH…LGFL). Residues 129 to 134 (HSTFFD) carry the HXXXXD motif motif. N-linked (GlcNAc...) asparagine glycosylation is present at asparagine 152. Positions 490–524 (PHKPRSTSQIPNASSPSSPTALANGTVQAPKQKGD) are disordered. The span at 495–518 (STSQIPNASSPSSPTALANGTVQA) shows a compositional bias: polar residues.

This sequence belongs to the 1-acyl-sn-glycerol-3-phosphate acyltransferase family. As to expression, widely expressed with much higher level in brain. Expressed in erythroleukemic cells but not in reticulocytes.

Its subcellular location is the endoplasmic reticulum membrane. It carries out the reaction a 1-acyl-sn-glycero-3-phosphoethanolamine + an acyl-CoA = a 1,2-diacyl-sn-glycero-3-phosphoethanolamine + CoA. The catalysed reaction is a 1-O-(1Z-alkenyl)-sn-glycero-3-phosphoethanolamine + an acyl-CoA = a 1-O-(1Z-alkenyl)-2-acyl-sn-glycero-3-phosphoethanolamine + CoA. It catalyses the reaction a 1-acyl-sn-glycero-3-phosphocholine + an acyl-CoA = a 1,2-diacyl-sn-glycero-3-phosphocholine + CoA. The enzyme catalyses a 1-O-alkyl-sn-glycero-3-phosphocholine + acetyl-CoA = a 1-O-alkyl-2-acetyl-sn-glycero-3-phosphocholine + CoA. It carries out the reaction a 1-acyl-sn-glycero-3-phospho-L-serine + an acyl-CoA = a 1,2-diacyl-sn-glycero-3-phospho-L-serine + CoA. The catalysed reaction is octanoyl-CoA + a 1-acyl-sn-glycero-3-phosphoethanolamine = 1-acyl-2-octanoyl-sn-glycero-3-phosphoethanolamine + CoA. It catalyses the reaction a 1-acyl-sn-glycero-3-phosphoethanolamine + hexadecanoyl-CoA = 1-acyl-2-hexadecanoyl-sn-glycero-3-phosphoethanolamine + CoA. The enzyme catalyses a 1-acyl-sn-glycero-3-phosphoethanolamine + octadecanoyl-CoA = 1-acyl-2-octadecanoyl-sn-glycero-3-phosphoethanolamine + CoA. It carries out the reaction a 1-acyl-sn-glycero-3-phosphoethanolamine + (9Z)-octadecenoyl-CoA = 1-acyl-2-(9Z)-octadecenoyl-sn-glycero-3-phosphoethanolamine + CoA. The catalysed reaction is a 1-acyl-sn-glycero-3-phosphoethanolamine + (5Z,8Z,11Z,14Z)-eicosatetraenoyl-CoA = 1-acyl-2-(5Z,8Z,11Z,14Z)-eicosatetraenoyl-sn-glycero-3-phosphoethanolamine + CoA. It catalyses the reaction a 1-O-(1Z-alkenyl)-sn-glycero-3-phosphoethanolamine + octanoyl-CoA = 1-O-(1Z)-alkenyl-2-octanoyl-sn-glycero-3-phosphoethanolamine + CoA. The enzyme catalyses a 1-O-(1Z-alkenyl)-sn-glycero-3-phosphoethanolamine + hexadecanoyl-CoA = 1-O-(1Z)-alkenyl-2-hexadecanoyl-sn-glycero-3-phosphoethanolamine + CoA. It carries out the reaction a 1-O-(1Z-alkenyl)-sn-glycero-3-phosphoethanolamine + octadecanoyl-CoA = 1-O-(1Z)-alkenyl-2-octadecanoyl-sn-glycero-3-phosphoethanolamine + CoA. The catalysed reaction is a 1-O-(1Z-alkenyl)-sn-glycero-3-phosphoethanolamine + (9Z)-octadecenoyl-CoA = 1-O-(1Z)-alkenyl-2-(9Z)-octadecenoyl-sn-glycero-3-phosphoethanolamine + CoA. It catalyses the reaction a 1-O-(1Z-alkenyl)-sn-glycero-3-phosphoethanolamine + (5Z,8Z,11Z,14Z)-eicosatetraenoyl-CoA = 1-O-(1Z)-alkenyl-2-(5Z,8Z,11Z,14Z)-eicosatetraenoyl-sn-glycero-3-phosphoethanolamine + CoA. The enzyme catalyses a 1-acyl-sn-glycero-3-phosphocholine + hexadecanoyl-CoA = 1-acyl-2-hexadecanoyl-sn-glycero-3-phosphocholine + CoA. It carries out the reaction a 1-acyl-sn-glycero-3-phosphocholine + (9Z)-octadecenoyl-CoA = a 1-acyl-2-(9Z)-octadecenoyl-sn-glycero-3-phosphocholine + CoA. The catalysed reaction is 1-O-hexadecyl-sn-glycero-3-phosphocholine + (9Z)-octadecenoyl-CoA = 1-O-hexadecyl-2-(9Z)-octadecenoyl-sn-glycero-3-phosphocholine + CoA. It catalyses the reaction 1-O-hexadecyl-sn-glycero-3-phosphocholine + (5Z,8Z,11Z,14Z)-eicosatetraenoyl-CoA = 1-O-hexadecyl-2-(5Z,8Z,11Z,14Z)-eicosatetraenoyl-sn-glycero-3-phosphocholine + CoA. The enzyme catalyses 1-hexadecanoyl-sn-glycero-3-phospho-L-serine + (9Z)-octadecenoyl-CoA = 1-hexadecanoyl-2-(9Z-octadecenoyl)-sn-glycero-3-phospho-L-serine + CoA. It carries out the reaction 1-octadecanoyl-sn-glycero-3-phospho-(1'-sn-glycerol) + (9Z)-octadecenoyl-CoA = 1-octadecanoyl-2-(9Z-octadecenoyl)-sn-glycero-3-phospho-(1'-sn-glycerol) + CoA. The catalysed reaction is 1-octadecanoyl-sn-glycero-3-phospho-(1'-sn-glycerol) + (5Z,8Z,11Z,14Z)-eicosatetraenoyl-CoA = 1-octadecanoyl-2-(5Z,8Z,11Z,14Z-eicosatetraenoyl)-sn-glycero-3-phospho-(1'-sn-glycerol) + CoA. The protein operates within lipid metabolism; phospholipid metabolism. Displays acyl-CoA-dependent lysophospholipid acyltransferase activity with a subset of lysophospholipids as substrates; converts lysophosphatidylethanolamine to phosphatidylethanolamine, 1-alkenyl-lysophatidylethanolamine to 1-alkenyl-phosphatidylethanolamine, lysophosphatidylglycerol and alkyl-lysophosphatidylcholine to phosphatidylglycerol and alkyl-phosphatidylcholine, respectively. In contrast, has no lysophosphatidylinositol, glycerol-3-phosphate, diacylglycerol or lysophosphatidic acid acyltransferase activity. Prefers long chain acyl-CoAs (C16, C18) as acyl donors. Converts lysophosphatidylcholine to phosphatidycholine. This Mus musculus (Mouse) protein is Lysophospholipid acyltransferase LPCAT4 (Lpcat4).